Reading from the N-terminus, the 297-residue chain is N-acetylmuramic acid 6-phosphate etherase (297 aa).

Residues A55–K218 form the SIS domain. E83 functions as the Proton donor in the catalytic mechanism. E114 is a catalytic residue.

The protein belongs to the GCKR-like family. MurNAc-6-P etherase subfamily. In terms of assembly, homodimer.

The enzyme catalyses N-acetyl-D-muramate 6-phosphate + H2O = N-acetyl-D-glucosamine 6-phosphate + (R)-lactate. Its pathway is amino-sugar metabolism; 1,6-anhydro-N-acetylmuramate degradation. The protein operates within amino-sugar metabolism; N-acetylmuramate degradation. It functions in the pathway cell wall biogenesis; peptidoglycan recycling. In terms of biological role, specifically catalyzes the cleavage of the D-lactyl ether substituent of MurNAc 6-phosphate, producing GlcNAc 6-phosphate and D-lactate. Together with AnmK, is also required for the utilization of anhydro-N-acetylmuramic acid (anhMurNAc) either imported from the medium or derived from its own cell wall murein, and thus plays a role in cell wall recycling. The chain is N-acetylmuramic acid 6-phosphate etherase from Salmonella paratyphi A (strain ATCC 9150 / SARB42).